Consider the following 678-residue polypeptide: Probable N-methylproline demethylase (678 aa).

Residues Gly59, Gln102, Arg220, Lys299, and 321–322 (TR) each bind FMN. Residues Cys345, Cys351, and Cys363 each contribute to the [4Fe-4S] cluster site. Residues Ala396, Glu415, Gln423, Arg433, and Ala460 each coordinate FAD.

This sequence in the N-terminal section; belongs to the NADH:flavin oxidoreductase/NADH oxidase family. It depends on FMN as a cofactor. FAD is required as a cofactor. [4Fe-4S] cluster serves as cofactor.

The enzyme catalyses N-methyl-L-proline + NAD(+) + H2O = L-proline + formaldehyde + NADH + H(+). It functions in the pathway amine and polyamine degradation; stachydrine degradation. In terms of biological role, possible NADH-dependent oxidase, may function as a demethylase that converts N-methylproline to proline. In Rhizobium meliloti (strain 1021) (Ensifer meliloti), this protein is Probable N-methylproline demethylase.